Reading from the N-terminus, the 131-residue chain is Photosystem II extrinsic protein U (131 aa).

The N-terminal stretch at 1–28 (MKFISRLLVACSLLIGLMGFLGADLAQA) is a signal peptide. The propeptide occupies 29 to 36 (LTPNPILA).

It belongs to the PsbU family. In terms of assembly, PSII is composed of 1 copy each of membrane proteins PsbA, PsbB, PsbC, PsbD, PsbE, PsbF, PsbH, PsbI, PsbJ, PsbK, PsbL, PsbM, PsbT, PsbX, PsbY, PsbZ, Psb30/Ycf12, peripheral proteins PsbO, CyanoQ (PsbQ), PsbU, PsbV and a large number of cofactors. It forms dimeric complexes.

Its subcellular location is the cellular thylakoid membrane. One of the extrinsic, lumenal subunits of photosystem II (PSII). PSII is a light-driven water plastoquinone oxidoreductase, using light energy to abstract electrons from H(2)O, generating a proton gradient subsequently used for ATP formation. The extrinsic proteins stabilize the structure of photosystem II oxygen-evolving complex (OEC), the ion environment of oxygen evolution and protect the OEC against heat-induced inactivation. May modulate the Cl(-) requirement for oxygen evolution. The polypeptide is Photosystem II extrinsic protein U (Synechocystis sp. (strain ATCC 27184 / PCC 6803 / Kazusa)).